The chain runs to 776 residues: General transcription and DNA repair factor IIH helicase subunit XPD (776 aa).

The Helicase ATP-binding domain occupies Asp-7–Asp-277. Met-42–Thr-49 is a binding site for ATP. Positions 115, 133, 150, and 184 each coordinate [4Fe-4S] cluster. Positions Asp-228–His-231 match the DEAH box motif. A disordered region spans residues His-736–Thr-776. Residues Thr-742–Asn-754 show a composition bias toward polar residues. Residues Ser-755–Thr-776 are compositionally biased toward low complexity.

Belongs to the helicase family. RAD3/XPD subfamily. As to quaternary structure, component of the 7-subunit TFIIH core complex composed of XPB/repB, XPD/repD, gtf2h1, gtf2h2, gtf2h3, gtf2h4 and gtf2h5, which is active in NER. The core complex associates with the 3-subunit CDK-activating kinase (CAK) module composed of cycH/cyclin H, cdk7 and mnat1 to form the 10-subunit holoenzyme (holo-TFIIH) active in transcription. Mg(2+) serves as cofactor. Requires [4Fe-4S] cluster as cofactor.

The protein localises to the nucleus. The enzyme catalyses Couples ATP hydrolysis with the unwinding of duplex DNA at the replication fork by translocating in the 5'-3' direction. This creates two antiparallel DNA single strands (ssDNA). The leading ssDNA polymer is the template for DNA polymerase III holoenzyme which synthesizes a continuous strand.. The catalysed reaction is ATP + H2O = ADP + phosphate + H(+). ATP-dependent 5'-3' DNA helicase, component of the general transcription and DNA repair factor IIH (TFIIH) core complex, which is involved in general and transcription-coupled nucleotide excision repair (NER) of damaged DNA and, when complexed to CDK-activating kinase (CAK), in transcription by RNA polymerase II. In NER, TFIIH acts by opening DNA around the lesion to allow the excision of the damaged oligonucleotide and its replacement by a new DNA fragment. The ATP-dependent helicase activity of XPD/repD is required for DNA opening. In transcription, TFIIH has an essential role in transcription initiation. When the pre-initiation complex (PIC) has been established, TFIIH is required for promoter opening and promoter escape. Phosphorylation of the C-terminal tail (CTD) of the largest subunit of RNA polymerase II by the kinase module CAK controls the initiation of transcription. XPD/repD acts by forming a bridge between CAK and the core-TFIIH complex. This Dictyostelium discoideum (Social amoeba) protein is General transcription and DNA repair factor IIH helicase subunit XPD.